The chain runs to 150 residues: D-aminoacyl-tRNA deacylase (150 aa).

The Gly-cisPro motif, important for rejection of L-amino acids signature appears at 140–141 (GP).

Belongs to the DTD family. In terms of assembly, homodimer.

It is found in the cytoplasm. It carries out the reaction glycyl-tRNA(Ala) + H2O = tRNA(Ala) + glycine + H(+). It catalyses the reaction a D-aminoacyl-tRNA + H2O = a tRNA + a D-alpha-amino acid + H(+). The catalysed reaction is D-tyrosyl-tRNA(Tyr) + H2O = D-tyrosine + tRNA(Tyr). Its function is as follows. An aminoacyl-tRNA editing enzyme that deacylates mischarged D-aminoacyl-tRNAs. Hydrolyzes D-tyrosyl-tRNA(Tyr) into D-tyrosine and free tRNA(Tyr). May also deacylate mischarged D-leucyl-tRNA(Leu). Also deacylates mischarged glycyl-tRNA(Ala), protecting cells against glycine mischarging by AlaRS. Acts via tRNA-based rather than protein-based catalysis; rejects L-amino acids rather than detecting D-amino acids in the active site. By recycling D-aminoacyl-tRNA to D-amino acids and free tRNA molecules, this enzyme counteracts the toxicity associated with the formation of D-aminoacyl-tRNA entities in vivo and helps enforce protein L-homochirality. The sequence is that of D-aminoacyl-tRNA deacylase from Saccharomyces cerevisiae (strain ATCC 204508 / S288c) (Baker's yeast).